The following is an 896-amino-acid chain: Rho GTPase-activating protein gacM (896 aa).

Residues 1-97 are disordered; it reads MSSFIGWKKN…SSNDTIGKSS (97 aa). Residues 10 to 26 are compositionally biased toward low complexity; the sequence is NSNSGGTPGASPTSSSP. The segment covering 27 to 38 has biased composition (polar residues); the sequence is LNSTISNANSVS. Composition is skewed to low complexity over residues 45–57 and 65–97; these read SISN…LSSS and NSNN…GKSS. One can recognise a Rho-GAP domain in the interval 139–330; it reads QPINPNTEFG…LWIEEFDMIS (192 aa). 4 stretches are compositionally biased toward low complexity: residues 375 to 391, 400 to 427, 448 to 460, and 473 to 506; these read IQQQ…QSHP, SSLS…LLPT, PTPT…TPQT, and NNNS…NNNN. 2 disordered regions span residues 375 to 514 and 701 to 770; these read IQQQ…GSPL and LPTG…ENQI. Residues 702–711 show a composition bias toward polar residues; that stretch reads PTGSSWSDFE. Composition is skewed to low complexity over residues 712–743 and 751–761; these read NNSS…NSSP and SNGLNSSSNSN.

It is found in the cytoplasm. Its function is as follows. Rho GTPase-activating protein involved in the signal transduction pathway. In Dictyostelium discoideum (Social amoeba), this protein is Rho GTPase-activating protein gacM (gacM).